A 219-amino-acid chain; its full sequence is Ribose-5-phosphate isomerase A (219 aa).

Substrate is bound by residues 28–31, 81–84, and 94–97; these read SGST, DGAD, and KGGG. The active-site Proton acceptor is E103. Substrate is bound at residue K121.

The protein belongs to the ribose 5-phosphate isomerase family. In terms of assembly, homodimer.

It carries out the reaction aldehydo-D-ribose 5-phosphate = D-ribulose 5-phosphate. The protein operates within carbohydrate degradation; pentose phosphate pathway; D-ribose 5-phosphate from D-ribulose 5-phosphate (non-oxidative stage): step 1/1. Functionally, catalyzes the reversible conversion of ribose-5-phosphate to ribulose 5-phosphate. This Haemophilus influenzae (strain PittGG) protein is Ribose-5-phosphate isomerase A.